Reading from the N-terminus, the 430-residue chain is Neuropeptide FF receptor 1 (430 aa).

The disordered stretch occupies residues 1–20 (MEGEPSQPPNSSWPLSQNGT). Residues 1–43 (MEGEPSQPPNSSWPLSQNGTNTEATPATNLTFSSYYQHTSPVA) lie on the Extracellular side of the membrane. The span at 9-20 (PNSSWPLSQNGT) shows a compositional bias: polar residues. Residues Asn-10, Asn-18, and Asn-29 are each glycosylated (N-linked (GlcNAc...) asparagine). The helical transmembrane segment at 44-64 (AMFIVAYALIFLLCMVGNTLV) threads the bilayer. Residues 65-80 (CFIVLKNRHMHTVTNM) are Cytoplasmic-facing. The helical transmembrane segment at 81-101 (FILNLAVSDLLVGIFCMPTTL) threads the bilayer. Residues 102 to 117 (VDNLITGWPFDNATCK) lie on the Extracellular side of the membrane. The N-linked (GlcNAc...) asparagine glycan is linked to Asn-113. Cys-116 and Cys-203 form a disulfide bridge. A helical membrane pass occupies residues 118 to 138 (MSGLVQGMSVSASVFTLVAIA). Residues 139–158 (VERFRCIVHPFREKLTLRKA) lie on the Cytoplasmic side of the membrane. A helical transmembrane segment spans residues 159 to 179 (LVTIAVIWALALLIMCPSAVT). The Extracellular portion of the chain corresponds to 180-214 (LTVTREEHHFMVDARNRSYPLYSCWEAWPEKGMRR). N-linked (GlcNAc...) asparagine glycosylation is present at Asn-195. The chain crosses the membrane as a helical span at residues 215 to 235 (VYTTVLFSHIYLAPLALIVVM). Residues 236 to 271 (YARIARKLCQAPGPAPGGEEAADPRASRRRARVVHM) lie on the Cytoplasmic side of the membrane. Residues 272-292 (LVMVALFFTLSWLPLWALLLL) form a helical membrane-spanning segment. Over 293–307 (IDYGQLSAPQLHLVT) the chain is Extracellular. Residues 308–328 (VYAFPFAHWLAFFNSSANPII) form a helical membrane-spanning segment. At 329–430 (YGYFNENFRR…LPLTIPAWDI (102 aa)) the chain is on the cytoplasmic side. Low complexity predominate over residues 379–404 (SDSGLPSESGPSSGAPRPGRLPLRNG). Positions 379–413 (SDSGLPSESGPSSGAPRPGRLPLRNGRVAHHGLPR) are disordered.

The protein belongs to the G-protein coupled receptor 1 family.

It is found in the cell membrane. Its function is as follows. Receptor for NPAF (A-18-F-amide) and NPFF (F-8-F-amide) neuropeptides, also known as morphine-modulating peptides. Can also be activated by a variety of naturally occurring or synthetic FMRF-amide like ligands. This receptor mediates its action by association with G proteins that activate a phosphatidylinositol-calcium second messenger system. This chain is Neuropeptide FF receptor 1, found in Homo sapiens (Human).